Reading from the N-terminus, the 1202-residue chain is DNA-directed RNA polymerase subunit beta (1202 aa).

It belongs to the RNA polymerase beta chain family. In terms of assembly, the RNAP catalytic core consists of 2 alpha, 1 beta, 1 beta' and 1 omega subunit. When a sigma factor is associated with the core the holoenzyme is formed, which can initiate transcription.

The catalysed reaction is RNA(n) + a ribonucleoside 5'-triphosphate = RNA(n+1) + diphosphate. In terms of biological role, DNA-dependent RNA polymerase catalyzes the transcription of DNA into RNA using the four ribonucleoside triphosphates as substrates. The protein is DNA-directed RNA polymerase subunit beta of Mycoplasmopsis synoviae (strain 53) (Mycoplasma synoviae).